The chain runs to 345 residues: Krueppel-like factor 3 (345 aa).

The interval 1-74 (MLMFDPVPVK…TVNKRSSPPS (74 aa)) is repressor domain. Residue Lys10 forms a Glycyl lysine isopeptide (Lys-Gly) (interchain with G-Cter in SUMO) linkage. Residues 60-68 (EPVDLTVNK) carry the 9aaTAD; inactive motif. The CTBP-binding motif motif lies at 61 to 65 (PVDLT). The tract at residues 66 to 112 (VNKRSSPPSAGNSPSSLKFPSSHRRASPGLSMPSSSPPIKKYSPPSP) is disordered. Residue Lys68 forms a Glycyl lysine isopeptide (Lys-Gly) (interchain with G-Cter in SUMO2) linkage. 2 stretches are compositionally biased toward low complexity: residues 70-81 (SSPPSAGNSPSS) and 92-108 (SPGL…KKYS). Ser71, Ser92, Ser101, Ser108, and Ser111 each carry phosphoserine. Glycyl lysine isopeptide (Lys-Gly) (interchain with G-Cter in SUMO2) cross-links involve residues Lys196 and Lys198. Phosphoserine is present on residues Ser216, Ser224, and Ser250. 3 consecutive C2H2-type zinc fingers follow at residues 260–284 (HRCD…RRTH), 290–314 (YKCT…FRKH), and 320–342 (FQCP…RKRH).

It belongs to the krueppel C2H2-type zinc-finger protein family. In terms of assembly, monomer. In terms of processing, sumoylated with SUMO1. Sumoylation is enhanced by PIAS1, PIAS2alpha and PIAS2beta, and PIAS4, but not by Pc2. Enhances transcriptional repression, but has no effect on DNA binding. Sumoylation on Lys-198 is the major site.

The protein resides in the nucleus. Functionally, binds to the CACCC box of erythroid cell-expressed genes. May play a role in hematopoiesis. This chain is Krueppel-like factor 3 (KLF3), found in Homo sapiens (Human).